The following is a 1148-amino-acid chain: Replication factor C subunit 1 (1148 aa).

Positions 46–56 (NSSRKEDDFKQ) are enriched in basic and acidic residues. Disordered regions lie at residues 46–201 (NSSR…LNDE) and 228–380 (TLAM…TNYQ). Lys-50 is covalently cross-linked (Glycyl lysine isopeptide (Lys-Gly) (interchain with G-Cter in SUMO2)). Residue Tyr-67 is modified to Phosphotyrosine. Ser-69, Ser-71, Ser-73, and Ser-108 each carry phosphoserine. Thr-110 is subject to Phosphothreonine. Residues 130-141 (RSTNSHLGTSNM) are compositionally biased toward polar residues. Position 156 is a phosphoserine (Ser-156). 2 positions are modified to phosphothreonine: Thr-161 and Thr-163. Ser-164, Ser-173, and Ser-190 each carry phosphoserine. Basic and acidic residues predominate over residues 234 to 246 (EEPKTKKARKDTE). A Phosphoserine modification is found at Ser-253. The span at 262-271 (EKHKYPHKVK) shows a compositional bias: basic residues. A phosphoserine mark is found at Ser-281 and Ser-283. Over residues 288-308 (SKYESSKESQQHSKSSADKIG) the composition is skewed to basic and acidic residues. At Ser-312 the chain carries Phosphoserine. Composition is skewed to basic and acidic residues over residues 323 to 353 (KRKE…ETKT) and 362 to 376 (AKKE…EKKR). Ser-368 carries the phosphoserine modification. A BRCT domain is found at 402 to 492 (GAENCLEGLI…PGKKSKYEIA (91 aa)). 2 stretches are compositionally biased toward basic and acidic residues: residues 496–507 (EMKKESKLERTP) and 520–538 (SKKE…RDSL). The interval 496 to 538 (EMKKESKLERTPQKNVQGKRKISPSKKESESKKSRPTSKRDSL) is disordered. A Phosphoserine modification is found at Ser-537. ATP is bound at residue 650–657 (SGPPGVGK). Residues 1081-1148 (KASRHSTSPS…RKGKGKSSKK (68 aa)) are disordered. Acidic residues predominate over residues 1094 to 1105 (EYNEELNEDDSQ). A phosphoserine mark is found at Ser-1104 and Ser-1106. The Nuclear localization signal signature appears at 1120 to 1124 (IKKKT). Positions 1130 to 1140 (SKPEKDKEPRK) are enriched in basic and acidic residues.

The protein belongs to the activator 1 large subunit family. In terms of assembly, large subunit of the RFC complex, an heteropentameric complex consisting of RFC1 and four small subunits RFC2, RFC3, RFC4 and RFC5; the RFC complex interacts with PCNA and the interaction involves RFC1. Wide tissue distribution. Undetectable in placental tissue.

It is found in the nucleus. Its function is as follows. Subunit of the replication factor C (RFC) complex which acts during elongation of primed DNA templates by DNA polymerases delta and epsilon, and is necessary for ATP-dependent loading of proliferating cell nuclear antigen (PCNA) onto primed DNA. This subunit binds to the primer-template junction. Binds the PO-B transcription element as well as other GA rich DNA sequences. Can bind single- or double-stranded DNA. This is Replication factor C subunit 1 (RFC1) from Homo sapiens (Human).